The primary structure comprises 238 residues: Pyridoxine 5'-phosphate synthase (238 aa).

N7 is a 3-amino-2-oxopropyl phosphate binding site. 9–10 contacts 1-deoxy-D-xylulose 5-phosphate; sequence DH. R18 contributes to the 3-amino-2-oxopropyl phosphate binding site. The active-site Proton acceptor is H43. Residues R45 and H50 each coordinate 1-deoxy-D-xylulose 5-phosphate. The active-site Proton acceptor is the E70. T100 serves as a coordination point for 1-deoxy-D-xylulose 5-phosphate. The active-site Proton donor is the H190. 3-amino-2-oxopropyl phosphate-binding positions include G191 and 212-213; that span reads GH.

This sequence belongs to the PNP synthase family. Homooctamer; tetramer of dimers.

Its subcellular location is the cytoplasm. The catalysed reaction is 3-amino-2-oxopropyl phosphate + 1-deoxy-D-xylulose 5-phosphate = pyridoxine 5'-phosphate + phosphate + 2 H2O + H(+). It functions in the pathway cofactor biosynthesis; pyridoxine 5'-phosphate biosynthesis; pyridoxine 5'-phosphate from D-erythrose 4-phosphate: step 5/5. Catalyzes the complicated ring closure reaction between the two acyclic compounds 1-deoxy-D-xylulose-5-phosphate (DXP) and 3-amino-2-oxopropyl phosphate (1-amino-acetone-3-phosphate or AAP) to form pyridoxine 5'-phosphate (PNP) and inorganic phosphate. The protein is Pyridoxine 5'-phosphate synthase of Prochlorococcus marinus (strain MIT 9515).